A 352-amino-acid chain; its full sequence is Phosphoribosylformylglycinamidine cyclo-ligase (352 aa).

Belongs to the AIR synthase family.

It is found in the cytoplasm. The enzyme catalyses 2-formamido-N(1)-(5-O-phospho-beta-D-ribosyl)acetamidine + ATP = 5-amino-1-(5-phospho-beta-D-ribosyl)imidazole + ADP + phosphate + H(+). It functions in the pathway purine metabolism; IMP biosynthesis via de novo pathway; 5-amino-1-(5-phospho-D-ribosyl)imidazole from N(2)-formyl-N(1)-(5-phospho-D-ribosyl)glycinamide: step 2/2. This Pseudomonas fluorescens (strain Pf0-1) protein is Phosphoribosylformylglycinamidine cyclo-ligase.